The primary structure comprises 2336 residues: RNA1 polyprotein (2336 aa).

Residues 599-1210 lie on the Cytoplasmic side of the membrane; the sequence is QVARIARNIF…YLKEHGLEVL (612 aa). Residues 797–964 enclose the SF3 helicase domain; it reads MKDLLDLQQR…PGVVFDPMDC (168 aa). Position 827-834 (827-834) interacts with ATP; that stretch reads GPSHCGKS. The helical transmembrane segment at 1211 to 1231 threads the bilayer; that stretch reads LLLAAMMILCVALYYFVGAFI. Residues 1232-1253 are Lumenal-facing; that stretch reads GVMGGALSMGAAMAGLKEVDMK. Residues 1278–1486 form the Peptidase C3 domain; that stretch reads YARGELDEEV…WADNLPNPCM (209 aa). Catalysis depends on for picornain 3C-like protease activity residues H1320, E1358, and C1450. One can recognise a RdRp catalytic domain in the interval 1771 to 1899; sequence DRAINCDYSS…SCTDKIAIYF (129 aa).

Belongs to the nepoviruses RNA1 polyprotein family. In terms of processing, specific enzymatic cleavages by picornain 3C-like protease in vivo yield mature proteins. Picornain 3C-like protease is autocatalytically processed. VPg is uridylylated by the polymerase and is covalently linked to the 5'-end of genomic RNA. This uridylylated form acts as a nucleotide-peptide primer for the polymerase.

The protein localises to the host endoplasmic reticulum lumen. Its subcellular location is the host endoplasmic reticulum membrane. The enzyme catalyses RNA(n) + a ribonucleoside 5'-triphosphate = RNA(n+1) + diphosphate. In terms of biological role, picornain 3C-like protease is a thiol protease that cleaves the P1 and P2 polyproteins. This Cycas necrotic stunt virus (CNSV) protein is RNA1 polyprotein.